Consider the following 145-residue polypeptide: Bacilliredoxin SAOUHSC_01610 (145 aa).

This sequence belongs to the bacilliredoxin family.

In Staphylococcus aureus (strain NCTC 8325 / PS 47), this protein is Bacilliredoxin SAOUHSC_01610.